We begin with the raw amino-acid sequence, 477 residues long: Glycogen synthase (477 aa).

Lysine 15 is an ADP-alpha-D-glucose binding site.

The protein belongs to the glycosyltransferase 1 family. Bacterial/plant glycogen synthase subfamily.

It catalyses the reaction [(1-&gt;4)-alpha-D-glucosyl](n) + ADP-alpha-D-glucose = [(1-&gt;4)-alpha-D-glucosyl](n+1) + ADP + H(+). The protein operates within glycan biosynthesis; glycogen biosynthesis. In terms of biological role, synthesizes alpha-1,4-glucan chains using ADP-glucose. This Shigella boydii serotype 4 (strain Sb227) protein is Glycogen synthase.